We begin with the raw amino-acid sequence, 456 residues long: Bifunctional protein GlmU (456 aa).

Residues 1–228 (MPQNTLNIVI…SHLAAGVNNK (228 aa)) are pyrophosphorylase. Residues 11–14 (LAAG), lysine 25, glutamine 75, 80–81 (GT), 102–104 (YGD), glycine 138, glutamate 153, asparagine 168, and asparagine 226 contribute to the UDP-N-acetyl-alpha-D-glucosamine site. Aspartate 104 contributes to the Mg(2+) binding site. Asparagine 226 provides a ligand contact to Mg(2+). Residues 229 to 249 (LQLAELERIFQTEQAQELLKA) form a linker region. Positions 250–456 (GVTLRDPARF…GWVRPEKNKQ (207 aa)) are N-acetyltransferase. UDP-N-acetyl-alpha-D-glucosamine-binding residues include arginine 332 and lysine 350. Histidine 362 (proton acceptor) is an active-site residue. Positions 365 and 376 each coordinate UDP-N-acetyl-alpha-D-glucosamine. Acetyl-CoA contacts are provided by residues alanine 379, 385–386 (NY), serine 404, alanine 422, and arginine 439.

This sequence in the N-terminal section; belongs to the N-acetylglucosamine-1-phosphate uridyltransferase family. The protein in the C-terminal section; belongs to the transferase hexapeptide repeat family. Homotrimer. Requires Mg(2+) as cofactor.

It localises to the cytoplasm. The enzyme catalyses alpha-D-glucosamine 1-phosphate + acetyl-CoA = N-acetyl-alpha-D-glucosamine 1-phosphate + CoA + H(+). It carries out the reaction N-acetyl-alpha-D-glucosamine 1-phosphate + UTP + H(+) = UDP-N-acetyl-alpha-D-glucosamine + diphosphate. It functions in the pathway nucleotide-sugar biosynthesis; UDP-N-acetyl-alpha-D-glucosamine biosynthesis; N-acetyl-alpha-D-glucosamine 1-phosphate from alpha-D-glucosamine 6-phosphate (route II): step 2/2. The protein operates within nucleotide-sugar biosynthesis; UDP-N-acetyl-alpha-D-glucosamine biosynthesis; UDP-N-acetyl-alpha-D-glucosamine from N-acetyl-alpha-D-glucosamine 1-phosphate: step 1/1. It participates in bacterial outer membrane biogenesis; LPS lipid A biosynthesis. Functionally, catalyzes the last two sequential reactions in the de novo biosynthetic pathway for UDP-N-acetylglucosamine (UDP-GlcNAc). The C-terminal domain catalyzes the transfer of acetyl group from acetyl coenzyme A to glucosamine-1-phosphate (GlcN-1-P) to produce N-acetylglucosamine-1-phosphate (GlcNAc-1-P), which is converted into UDP-GlcNAc by the transfer of uridine 5-monophosphate (from uridine 5-triphosphate), a reaction catalyzed by the N-terminal domain. This is Bifunctional protein GlmU from Neisseria meningitidis serogroup A / serotype 4A (strain DSM 15465 / Z2491).